A 392-amino-acid chain; its full sequence is MVDTMNARNTQFTKAFHALKQNAGSHSPSMEDLKKMFPTLEIKIDACYLSNPYASELVLDYIDRELIQTNAYKKVLTHYPSQQRSLQKVMAESLHVKPENIFIGNGATEIIQMLLQQEEVQKVALMIPTFSSYYEFVGKGCEVVYFPLNERDDYSFDADKYCQFIENEQPDTVVLINPNNPNGAYLSLEKMHILLKRLAFVPRIIIDESFIHFAYEDEALTCLSSTVLFDMYPNVIIVKSLSKDFGIAGVRLGYALMDSRKIDALLEHGFLWNINGIGEYCLRLFVREDFLKRYEEARKQYIKEMCRFKEALLGIENVYVYPSMANFVMLKLPSRIKASFVISALLVEYGIYVRTMADKIGVEGECIRIAGRTREENNCIVMALKSILKDSK.

The tract at residues 22 to 29 (NAGSHSPS) is required for catalytic activity. Residue asparagine 180 coordinates O-phospho-L-serine. Lysine 243 carries the post-translational modification N6-(pyridoxal phosphate)lysine. Positions 354 and 368 each coordinate O-phospho-L-serine.

Belongs to the class-II pyridoxal-phosphate-dependent aminotransferase family. Homodimer. The cofactor is pyridoxal 5'-phosphate.

The enzyme catalyses O-phospho-L-serine + H(+) = phosphoethanolamine + CO2. It functions in the pathway cofactor biosynthesis. In terms of biological role, pyridoxal phosphate (PLP)-dependent decarboxylase involved in the biosynthesis of norcobamides, cofactors in the tetrachloroethene reductive dehalogenase PceA of S.multivorans. Catalyzes the decarboxylation of L-serine O-phosphate to ethanolamine O-phosphate, the precursor for the linkage between the nucleotide loop and the corrin ring in norcobamide. Less active with L-threonine phosphate. No activity with L-serine or L-threonine. Has no aminotransferase activity as no production of L-glutamate with L-histidinol phosphate and 2-oxoglutarate as substrates. Complements growth defects in the S.enterica cobD deletion mutant, but of the cobamides, the norpseudo-vitamin B12 (norpseudo-B12) rather than the pseudo-B12 is produced in the mutant. However, addition of L-threonine phosphate to the culture minimal medium of the mutant results in formation of also the pseudo-B12, indicating the dual substrate specificity of this enzyme. This Sulfurospirillum multivorans (strain DM 12446 / JCM 15788 / NBRC 109480) protein is L-serine phosphate decarboxylase.